A 365-amino-acid chain; its full sequence is Holliday junction branch migration complex subunit RuvB (365 aa).

The tract at residues 1–191 (MNFDPIDDFD…FGFTAHMDFY (191 aa)) is large ATPase domain (RuvB-L). ATP contacts are provided by residues Leu30, Arg31, Gly72, Lys75, Thr76, Ser77, 138-140 (EDF), Arg181, Tyr191, and Arg228. Residue Thr76 coordinates Mg(2+). The interval 192 to 262 (EPEELQQILM…VAQAALAVYD (71 aa)) is small ATPAse domain (RuvB-S). Residues 265–365 (QLGLDRLDRS…QATLFDPNGE (101 aa)) are head domain (RuvB-H). DNA is bound by residues Arg320 and Arg325.

It belongs to the RuvB family. As to quaternary structure, homohexamer. Forms an RuvA(8)-RuvB(12)-Holliday junction (HJ) complex. HJ DNA is sandwiched between 2 RuvA tetramers; dsDNA enters through RuvA and exits via RuvB. An RuvB hexamer assembles on each DNA strand where it exits the tetramer. Each RuvB hexamer is contacted by two RuvA subunits (via domain III) on 2 adjacent RuvB subunits; this complex drives branch migration. In the full resolvosome a probable DNA-RuvA(4)-RuvB(12)-RuvC(2) complex forms which resolves the HJ.

The protein localises to the cytoplasm. The enzyme catalyses ATP + H2O = ADP + phosphate + H(+). Its function is as follows. The RuvA-RuvB-RuvC complex processes Holliday junction (HJ) DNA during genetic recombination and DNA repair, while the RuvA-RuvB complex plays an important role in the rescue of blocked DNA replication forks via replication fork reversal (RFR). RuvA specifically binds to HJ cruciform DNA, conferring on it an open structure. The RuvB hexamer acts as an ATP-dependent pump, pulling dsDNA into and through the RuvAB complex. RuvB forms 2 homohexamers on either side of HJ DNA bound by 1 or 2 RuvA tetramers; 4 subunits per hexamer contact DNA at a time. Coordinated motions by a converter formed by DNA-disengaged RuvB subunits stimulates ATP hydrolysis and nucleotide exchange. Immobilization of the converter enables RuvB to convert the ATP-contained energy into a lever motion, pulling 2 nucleotides of DNA out of the RuvA tetramer per ATP hydrolyzed, thus driving DNA branch migration. The RuvB motors rotate together with the DNA substrate, which together with the progressing nucleotide cycle form the mechanistic basis for DNA recombination by continuous HJ branch migration. Branch migration allows RuvC to scan DNA until it finds its consensus sequence, where it cleaves and resolves cruciform DNA. This is Holliday junction branch migration complex subunit RuvB from Rhodococcus erythropolis (strain PR4 / NBRC 100887).